The primary structure comprises 139 residues: Spermatogenesis-associated protein 33 (139 aa).

An interaction with ATG16L1 region spans residues 1-67 (MVTHAAGART…TAKHPPPAAS (67 aa)). Residues 1–83 (MVTHAAGART…VKQKSSRKKV (83 aa)) form a disordered region. Positions 25–50 (KSKEKLMEKHSQEARQADRESEKPVD) are enriched in basic and acidic residues. Residues 68 to 139 (LEEKPDVKQK…ADAYNSHLKE (72 aa)) form an interaction with VDAC2 region. Residues 86–91 (PQIIIT) carry the PQIIIT motif. Ser-94 carries the phosphoserine modification. Residues 97–109 (TLVSCSSSGSDQQ) show a composition bias toward polar residues. Residues 97 to 139 (TLVSCSSSGSDQQRTIREPEDWGPYRRHRNPSTADAYNSHLKE) form a disordered region. Basic and acidic residues predominate over residues 110–120 (RTIREPEDWGP).

In terms of assembly, interacts (via PQIIIT motif) with PPP3R1, PPP3R2, PPP3CA, PPP3CB and PPP3CC. Interacts with VDAC2. Interacts with ATG16L1 (via WD repeats).

It localises to the cytoplasm. Its subcellular location is the cytosol. The protein localises to the nucleus. The protein resides in the mitochondrion. In terms of biological role, plays an important role in sperm motility and male fertility. Required for sperm midpiece flexibility and for the localization of sperm calcineurin to the mitochondria. Promotes mitophagy as well as acts as an autophagy mediator in male germline cells. Links damaged mitochondria to autophagosomes via its binding to the outer mitochondrial membrane protein VDAC2, as well as to key autophagy machinery component ATG16L1. The sequence is that of Spermatogenesis-associated protein 33 (SPATA33) from Homo sapiens (Human).